Here is a 450-residue protein sequence, read N- to C-terminus: Cysteine proteinase (450 aa).

Positions Met-1 to Ala-20 are cleaved as a signal peptide. The propeptide at Ala-21–Arg-125 is activation peptide. N-linked (GlcNAc...) asparagine glycosylation occurs at Asn-120. Residues Cys-147 and Cys-188 are joined by a disulfide bond. Active-site residues include Cys-150, His-287, and Asn-307. Positions Thr-343–Gln-450 are 108-residue extension. Asn-397 is a glycosylation site (N-linked (GlcNAc...) asparagine).

It belongs to the peptidase C1 family.

It is found in the lysosome. The cysteine proteinases have a potential role in host-parasite interaction and virulence. The polypeptide is Cysteine proteinase (Trypanosoma brucei brucei).